The following is a 72-amino-acid chain: Translation initiation factor IF-1 (72 aa).

Positions 1 to 72 constitute an S1-like domain; sequence MAKEESIEVE…SKGRITYRYK (72 aa).

The protein belongs to the IF-1 family. As to quaternary structure, component of the 30S ribosomal translation pre-initiation complex which assembles on the 30S ribosome in the order IF-2 and IF-3, IF-1 and N-formylmethionyl-tRNA(fMet); mRNA recruitment can occur at any time during PIC assembly.

It is found in the cytoplasm. In terms of biological role, one of the essential components for the initiation of protein synthesis. Stabilizes the binding of IF-2 and IF-3 on the 30S subunit to which N-formylmethionyl-tRNA(fMet) subsequently binds. Helps modulate mRNA selection, yielding the 30S pre-initiation complex (PIC). Upon addition of the 50S ribosomal subunit IF-1, IF-2 and IF-3 are released leaving the mature 70S translation initiation complex. The protein is Translation initiation factor IF-1 of Chlorobaculum tepidum (strain ATCC 49652 / DSM 12025 / NBRC 103806 / TLS) (Chlorobium tepidum).